Reading from the N-terminus, the 164-residue chain is Lipoprotein signal peptidase (164 aa).

A run of 3 helical transmembrane segments spans residues Phe-12–Ala-32, Trp-70–Thr-90, and Gln-93–Phe-113. Residues Asp-123 and Asp-141 contribute to the active site. A helical membrane pass occupies residues Tyr-133–Ile-153.

The protein belongs to the peptidase A8 family.

The protein resides in the cell inner membrane. It catalyses the reaction Release of signal peptides from bacterial membrane prolipoproteins. Hydrolyzes -Xaa-Yaa-Zaa-|-(S,diacylglyceryl)Cys-, in which Xaa is hydrophobic (preferably Leu), and Yaa (Ala or Ser) and Zaa (Gly or Ala) have small, neutral side chains.. Its pathway is protein modification; lipoprotein biosynthesis (signal peptide cleavage). In terms of biological role, this protein specifically catalyzes the removal of signal peptides from prolipoproteins. The sequence is that of Lipoprotein signal peptidase from Pseudoalteromonas atlantica (strain T6c / ATCC BAA-1087).